Reading from the N-terminus, the 433-residue chain is uncharacterized protein (433 aa).

Transmembrane regions (helical) follow at residues 28-48 (FAALGPGILMASAAVGGSHII), 56-76 (IYGWQLAIIIILANLFKYPFF), 102-122 (IWIFFLLNVFATVINTAAVGL), 126-146 (AILTFVLPVQVPVPTLSFIVI), 164-184 (LSKLIMIALTITTVSAVIIAL), 207-227 (ALGFIVALMGWMPAPIEISAI), 250-270 (FNVGYIGTAILALVFLALGAL), 304-324 (GLIAFIAFMCMFGTTITVIDG), 345-365 (SYLNVAITFAALAGLAIIFYF), 375-395 (FAMIASFVSTPVFAYLNLSLV), and 406-426 (LLWLSLIGLMYLTSFTLLFIA).

The protein resides in the cell membrane. This is an uncharacterized protein from Pasteurella multocida (strain Pm70).